The sequence spans 460 residues: Cysteine--tRNA ligase (460 aa).

Position 28 (C28) interacts with Zn(2+). The short motif at 30 to 40 (MTVYDYCHLGH) is the 'HIGH' region element. Zn(2+)-binding residues include C209, H234, and E238. A 'KMSKS' region motif is present at residues 266–270 (KMSKS). Residue K269 coordinates ATP.

Belongs to the class-I aminoacyl-tRNA synthetase family. In terms of assembly, monomer. It depends on Zn(2+) as a cofactor.

The protein localises to the cytoplasm. The enzyme catalyses tRNA(Cys) + L-cysteine + ATP = L-cysteinyl-tRNA(Cys) + AMP + diphosphate. The sequence is that of Cysteine--tRNA ligase from Pseudomonas putida (strain ATCC 700007 / DSM 6899 / JCM 31910 / BCRC 17059 / LMG 24140 / F1).